Reading from the N-terminus, the 93-residue chain is Exodeoxyribonuclease 7 small subunit (93 aa).

A compositionally biased stretch (basic and acidic residues) spans 61–75 (IDDNGDEKVYEKQTD). The interval 61-93 (IDDNGDEKVYEKQTDDPSNNGGGNRGFGSADEQ) is disordered.

Belongs to the XseB family. In terms of assembly, heterooligomer composed of large and small subunits.

It localises to the cytoplasm. It carries out the reaction Exonucleolytic cleavage in either 5'- to 3'- or 3'- to 5'-direction to yield nucleoside 5'-phosphates.. In terms of biological role, bidirectionally degrades single-stranded DNA into large acid-insoluble oligonucleotides, which are then degraded further into small acid-soluble oligonucleotides. This Limosilactobacillus reuteri (strain DSM 20016) (Lactobacillus reuteri) protein is Exodeoxyribonuclease 7 small subunit.